The sequence spans 1076 residues: JmjC domain-containing histone demethylation protein 1 (1076 aa).

The region spanning 93–265 (FSQTPLEDLV…TQLRVYQVEN (173 aa)) is the JmjC domain. Threonine 159 contacts substrate. Residues histidine 162 and aspartate 164 each coordinate Fe cation. Lysine 179 provides a ligand contact to substrate. A Fe cation-binding site is contributed by histidine 233. Disordered regions lie at residues 598 to 748 (FEEE…DPVV) and 789 to 1056 (KIEP…KIPS). Residues 610-634 (DQEEEEYDAEEPEDQEEEEEDEYQA) are compositionally biased toward acidic residues. Basic and acidic residues predominate over residues 653–680 (AKNDESEEVSVKKDKKEKMEKVEKDEKR). Positions 681–698 (RNSKSKKDKISKEKKKKE) are enriched in basic residues. 2 stretches are compositionally biased toward basic and acidic residues: residues 699–714 (RERI…ELRA) and 789–811 (KIEP…EPEH). Residues 935-946 (ASAPSSRHSSIS) are compositionally biased toward low complexity. Polar residues-rich tracts occupy residues 957 to 990 (FNSS…SINR) and 1004 to 1019 (DSLS…TYPT). Residues 1044–1056 (QHHDDGHKHKIPS) are compositionally biased toward basic and acidic residues.

This sequence belongs to the JHDM1 histone demethylase family. The cofactor is Fe(2+).

Its subcellular location is the nucleus. The enzyme catalyses N(6),N(6)-dimethyl-L-lysyl(36)-[histone H3] + 2 2-oxoglutarate + 2 O2 = L-lysyl(36)-[histone H3] + 2 formaldehyde + 2 succinate + 2 CO2. Functionally, histone demethylase that specifically demethylates 'Lys-36' of histone H3, thereby playing a central role in histone code. Has a role in regulating lifespan. The sequence is that of JmjC domain-containing histone demethylation protein 1 (jhdm-1) from Caenorhabditis elegans.